Reading from the N-terminus, the 4814-residue chain is Nonribosomal peptide synthetase SIDC (4814 aa).

The interval 21–453 is adenylation 1; sequence PGPTLLHQLV…MKTSGCHGAA (433 aa). Positions 528 to 601 constitute a Carrier 1 domain; sequence DLKKSTEPEL…HLVSSIKIID (74 aa). At Ser562 the chain carries O-(pantetheine 4'-phosphoryl)serine. Residues 637–1045 form a condensation 1 region; that stretch reads VQDIIPCTNL…SLLESMRSME (409 aa). Positions 1101-1488 are adenylation 2; the sequence is TYTDLNRNAN…SRVSSATAAV (388 aa). 2 consecutive Carrier domains span residues 1589–1666 and 2134–2210; these read EDWN…HSSH and SSWT…FENG. An O-(pantetheine 4'-phosphoryl)serine mark is found at Ser1626 and Ser2171. Condensation regions lie at residues 1706 to 2210 and 2243 to 2649; these read LQEA…FENG and LPCT…HQHD. The adenylation 3 stretch occupies residues 2709–3100; sequence TFAQLNSIGN…IRSVKNIHDV (392 aa). Residues 3203–3280 enclose the Carrier 4 domain; it reads SKDSAGYQKL…DLAVALSTAS (78 aa). Ser3240 is modified (O-(pantetheine 4'-phosphoryl)serine). A condensation 4 region spans residues 3319–3732; it reads YIYPCSPLQQ…VQVETALVDA (414 aa). The Carrier 5 domain maps to 3747 to 3823; it reads EVWGPAADVL…YLSSLVMRLT (77 aa). At Ser3784 the chain carries O-(pantetheine 4'-phosphoryl)serine. A condensation 5 region spans residues 3857 to 4258; the sequence is DILPTTPLQD…YVLRHAEEDV (402 aa). Residues 4295 to 4368 enclose the Carrier 6 domain; that stretch reads NATSLAIRKV…HMAEQVAALG (74 aa). Ser4329 is modified (O-(pantetheine 4'-phosphoryl)serine). Residues 4504-4686 are condensation 6; sequence ETLLRLRIHH…HEDMQKITAD (183 aa).

This sequence belongs to the NRP synthetase family. Requires pantetheine 4'-phosphate as cofactor.

It participates in siderophore biosynthesis. In terms of biological role, nonribosomal peptide synthetase; part of the gene cluster that mediates the biosynthesis of at least 11 siderophores, including beauverichelin A, dimerumic acid (DA), Na-dimethyl coprogen (NADC), eleutherazine B, ferricrocin (FC), fusarinine A, fusarinine C (FsC), metachelin A, mevalonolactone, rhodotorulic acid (RA) and tenellin. This cocktail of siderophores for iron metabolism is essential for virulence, and more specifically for the fungal virulence in penetrating through the host cuticle. Siderophore synthesis is also involved in conidial germination under iron-deficient conditions. SIDC catalyzes the assembly of ferricrocin whereas SIDD catalyzes the assembly of fusarinine C. The chain is Nonribosomal peptide synthetase SIDC from Beauveria bassiana (strain ARSEF 2860) (White muscardine disease fungus).